A 185-amino-acid polypeptide reads, in one-letter code: UPF0200 protein TON_1344 (185 aa).

7-14 (GMPGSGKS) contributes to the ATP binding site.

The protein belongs to the UPF0200 family.

The sequence is that of UPF0200 protein TON_1344 from Thermococcus onnurineus (strain NA1).